The following is a 186-amino-acid chain: CRS2-like protein, chloroplastic (186 aa).

A chloroplast-targeting transit peptide spans 1–49 (MAMTAASVFGSGGCLELLTSSKAMRGKLWTRLAPFISKRHASTSQTSLS). TRNA is bound at residue Y73. H78 acts as the Proton acceptor in catalysis. TRNA contacts are provided by Y123, N125, and N171.

It belongs to the PTH family.

Its subcellular location is the plastid. It localises to the chloroplast. This is CRS2-like protein, chloroplastic from Oryza sativa subsp. japonica (Rice).